A 209-amino-acid chain; its full sequence is Small ribosomal subunit protein uS4 (209 aa).

The interval 23–46 (SRNPLLKKPHPPGQHGMQRKKKSD) is disordered. One can recognise an S4 RNA-binding domain in the interval 93 to 156 (CRLDNMVYRM…RKLQSVQESL (64 aa)).

This sequence belongs to the universal ribosomal protein uS4 family. As to quaternary structure, part of the 30S ribosomal subunit. Contacts protein S5. The interaction surface between S4 and S5 is involved in control of translational fidelity.

In terms of biological role, one of the primary rRNA binding proteins, it binds directly to 16S rRNA where it nucleates assembly of the body of the 30S subunit. With S5 and S12 plays an important role in translational accuracy. The protein is Small ribosomal subunit protein uS4 of Chlamydia felis (strain Fe/C-56) (Chlamydophila felis).